Here is a 224-residue protein sequence, read N- to C-terminus: UPF0319 protein VC_1853 (224 aa).

The signal sequence occupies residues 1–21; the sequence is MKLNPLILGLLLSFSAGHSLA.

It belongs to the UPF0319 family.

This chain is UPF0319 protein VC_1853, found in Vibrio cholerae serotype O1 (strain ATCC 39315 / El Tor Inaba N16961).